The sequence spans 496 residues: Transcription termination factor MTERF9, chloroplastic (496 aa).

The N-terminal 44 residues, 1–44, are a transit peptide targeting the chloroplast; that stretch reads MAGFSLYCFKNPRILFTLPSESPLFVLGSDKCSPATRRPSRKTR. Disordered stretches follow at residues 57 to 90 and 102 to 155; these read IINP…DDDW and YEKK…SWRL. Residues 74–90 are compositionally biased toward acidic residues; it reads DSDEDDDDDDDDDDDDW. A compositionally biased stretch (basic residues) spans 105–123; it reads KKPKSHKQTIAKKSVKKGI. Over residues 146–155 the composition is skewed to basic and acidic residues; that stretch reads SEKKKESWRL.

This sequence belongs to the mTERF family.

It is found in the plastid. It localises to the chloroplast. Transcription termination factor required for processing and steady-state levels of plastid transcripts. May play a role in response to abiotic stresses. This chain is Transcription termination factor MTERF9, chloroplastic, found in Arabidopsis thaliana (Mouse-ear cress).